A 101-amino-acid polypeptide reads, in one-letter code: Stefin-C (101 aa).

An N-acetylmethionine modification is found at Met-1. Residues 49 to 53 (QVVAG) carry the Secondary area of contact motif.

It belongs to the cystatin family.

The protein resides in the cytoplasm. Strong inhibitor of papain and cathepsin L but poor inhibitor of cathepsin B. This Bos taurus (Bovine) protein is Stefin-C.